Reading from the N-terminus, the 130-residue chain is Small ribosomal subunit protein uS11c (130 aa).

Belongs to the universal ribosomal protein uS11 family. As to quaternary structure, part of the 30S ribosomal subunit.

It localises to the plastid. It is found in the chloroplast. This Marchantia polymorpha (Common liverwort) protein is Small ribosomal subunit protein uS11c.